Reading from the N-terminus, the 476-residue chain is PTS system N-acetylmuramic acid-specific EIIBC component (476 aa).

A PTS EIIB type-1 domain is found at Met1–Ser89. Catalysis depends on Cys28, which acts as the Phosphocysteine intermediate; for EIIB activity. The region spanning Ala116 to Ser476 is the PTS EIIC type-1 domain. The next 10 membrane-spanning stretches (helical) occupy residues Phe118–Leu138, Leu160–Gly180, Ala186–Asn206, Phe220–Val240, Thr265–Phe285, Val304–Val324, Leu337–Phe357, Gly371–Pro391, Phe396–Leu416, and Val443–Ile463.

Its subcellular location is the cell inner membrane. It carries out the reaction N-acetyl-beta-D-muramate(out) + N(pros)-phospho-L-histidyl-[protein] = N-acetyl-beta-D-muramate 6-phosphate(in) + L-histidyl-[protein]. The phosphoenolpyruvate-dependent sugar phosphotransferase system (sugar PTS), a major carbohydrate active transport system, catalyzes the phosphorylation of incoming sugar substrates concomitantly with their translocation across the cell membrane. This system is involved in N-acetylmuramic acid (MurNAc) transport, yielding cytoplasmic MurNAc-6-P. Is also able to take up anhydro-N-acetylmuramic acid (anhMurNAc), but cannot phosphorylate the carbon 6, probably because of the 1,6-anhydro ring. The chain is PTS system N-acetylmuramic acid-specific EIIBC component (murP) from Pasteurella multocida (strain Pm70).